The chain runs to 77 residues: Apelin (77 aa).

The signal sequence occupies residues 1–22 (MNVKILTLVIVLVVSLLCSASA). Residues 21-77 (SAGPMASTEHSKEIEEVGSMRTPLRQNPARAGRSQRPAGWRRRRPRPRLSHKGPMPF) form a disordered region. A compositionally biased stretch (basic residues) spans 59–71 (GWRRRRPRPRLSH).

It belongs to the apelin family.

It localises to the secreted. It is found in the extracellular space. Functionally, peptide hormone that functions as endogenous ligand for the G-protein-coupled apelin receptor (aplnra and/or aplnrb), that plays a role in cadiovascular homeostasis. Functions as a balanced agonist activating both G(i) protein pathway and beta-arrestin pathway of APLNR. Downstream G proteins activation, apelin can inhibit cAMP production and activate key intracellular effectors such as ERKs. On the other hand, APLNR activation induces beta-arrestin recruitment to the membrane leading to desensitization and internalization of the receptor. Apelin blunts cardiac hypertrophic induction from APLNR on response to pathological stimuli, but also induces myocardial hypertrophy under normal conditions. Involved in the regulation of cardiac precursor cell movements during gastrulation and heart morphogenesis. Plays a role in early coronary blood vessels formation. Mediates myocardial contractility in an ERK1/2-dependent manner. May also have a role in the central control of body fluid homeostasis. This Danio rerio (Zebrafish) protein is Apelin.